Here is a 547-residue protein sequence, read N- to C-terminus: Pyochelin synthase PchD (547 aa).

The protein belongs to the ATP-dependent AMP-binding enzyme family.

The enzyme catalyses salicylate + holo-[ACP] + ATP = salicyl-[ACP] + AMP + diphosphate. It participates in siderophore biosynthesis. It functions in the pathway antifungal biosynthesis. Functionally, involved in the biosynthesis of the siderophore pyochelin. Specifically adenylates salicylate and loads it onto the holo form of PchE via a thioester linkage to the phosphopanthetheine moiety. Is also involved in the synthesis of the antifungal antibiotic dihydroaeruginoic acid (Dha or hydroxyphenyl-thiazolinyl-carboxylate), a precursor of pyochelin. The chain is Pyochelin synthase PchD from Pseudomonas aeruginosa (strain UCBPP-PA14).